The primary structure comprises 163 residues: 2-C-methyl-D-erythritol 2,4-cyclodiphosphate synthase (163 aa).

A divalent metal cation contacts are provided by Asp11 and His13. Residues 11 to 13 and 37 to 38 contribute to the 4-CDP-2-C-methyl-D-erythritol 2-phosphate site; these read DIH and HS. His45 provides a ligand contact to a divalent metal cation. 4-CDP-2-C-methyl-D-erythritol 2-phosphate is bound by residues 59-61, 64-68, 103-109, and Arg145; these read DIG, FSDTD, and AQVPKMA.

Belongs to the IspF family. In terms of assembly, homotrimer. It depends on a divalent metal cation as a cofactor.

It carries out the reaction 4-CDP-2-C-methyl-D-erythritol 2-phosphate = 2-C-methyl-D-erythritol 2,4-cyclic diphosphate + CMP. It functions in the pathway isoprenoid biosynthesis; isopentenyl diphosphate biosynthesis via DXP pathway; isopentenyl diphosphate from 1-deoxy-D-xylulose 5-phosphate: step 4/6. In terms of biological role, involved in the biosynthesis of isopentenyl diphosphate (IPP) and dimethylallyl diphosphate (DMAPP), two major building blocks of isoprenoid compounds. Catalyzes the conversion of 4-diphosphocytidyl-2-C-methyl-D-erythritol 2-phosphate (CDP-ME2P) to 2-C-methyl-D-erythritol 2,4-cyclodiphosphate (ME-CPP) with a corresponding release of cytidine 5-monophosphate (CMP). The chain is 2-C-methyl-D-erythritol 2,4-cyclodiphosphate synthase from Nitrosomonas europaea (strain ATCC 19718 / CIP 103999 / KCTC 2705 / NBRC 14298).